We begin with the raw amino-acid sequence, 842 residues long: MRRPLCAALLAAAVLALAAGAPAAARGGAGGRSREHRDARYEIEEWEMVVGAGPAVHTFTIRCLGPRGIERVAHIANLSRLLDGYIAVHVDVARTSGLRDTMFFLPRAAVDNASAADIPDTPAVQSHPGLFGAAFSWSYLQTRHLVDYDLVPSRPLQDWYFSQARAESNAARPPPAPRVTPTPAGRVAAFDINDVLASGPEHFFVPVRADRKRRERHVADFAAVWPVSYIPAGRAVLSCERAAARLAVGLGFLSVSVTSRDLLPLEFMVAPADANVRMITAFNGGGAFPPPGPAAGPQRRAYVIGYGNSRLDSHMYLTMREVASYANEPADFRAHLTAAHREAFLMLREAAAARRGPSAGPAPNAAYHAYRVAARLGLALSALTEGALADGYVLAEELVDLDYHLKLLSRVLLGAGLGCAANGRVRARTIAQLAVPRELRPDAFIPEPAGAALESVVARGRKLRAVYAFSGPDAPLAARLLAHGVVSDLYDAFLRGELTWGPPMRHALFFAVAASAFPADAQALELARDVTRKCTAMCTAGHATAAALDLEEVYAHVGGGAGGDAGFELLDAFSPCMASFRLDLLEEAHVLDVLSAVPARAALDAWLEAQPAAAAPNLSAAALGMLGRGGLFGPAHAAALAPELFAAPCGGWGAGAAVAIVPVAPNASYVITRAHPRRGLTYTLQGIDVANPLLVTFVRGTSCVSASGAVEARRLAVPGPLDACAYCGSVFVRYLPSGAVMDIVLIADKRTEVEFSRGANSSMPVFNPRLHSGRSRAMLLFPNGTVVSVLAFAGHEAPTFSPAYVWASVGGALVAGTTIYAIAKMLCSSVPLARGYSSVPVF.

A signal peptide spans 1 to 20; that stretch reads MRRPLCAALLAAAVLALAAG. Over 21-802 the chain is Virion surface; that stretch reads APAAARGGAG…AGHEAPTFSP (782 aa). Asparagine 77 and asparagine 112 each carry an N-linked (GlcNAc...) asparagine; by host glycan. The segment at 240-303 is interaction with gL; it reads ERAAARLAVG…AAGPQRRAYV (64 aa). N-linked (GlcNAc...) asparagine; by host glycosylation is found at asparagine 617, asparagine 666, asparagine 760, and asparagine 783. The helical transmembrane segment at 803-823 threads the bilayer; that stretch reads AYVWASVGGALVAGTTIYAIA. Residues 824–842 lie on the Intravirion side of the membrane; the sequence is KMLCSSVPLARGYSSVPVF.

Belongs to the herpesviridae glycoprotein H family. Interacts with glycoprotein L (gL); this interaction is necessary for the correct processing and cell surface expression of gH. The heterodimer gH/gL seems to interact with gB trimers during fusion. N-glycosylated, O-glycosylated, and sialylated.

It is found in the virion membrane. The protein resides in the host cell membrane. Its subcellular location is the host endosome membrane. Its function is as follows. The heterodimer glycoprotein H-glycoprotein L is required for the fusion of viral and plasma membranes leading to virus entry into the host cell. Following initial binding to host receptor, membrane fusion is mediated by the fusion machinery composed of gB and the heterodimer gH/gL. May also be involved in the fusion between the virion envelope and the outer nuclear membrane during virion morphogenesis. The sequence is that of Envelope glycoprotein H from Bos taurus (Bovine).